The following is a 392-amino-acid chain: Chorismate synthase (392 aa).

The NADP(+) site is built by Arg39 and Arg45. FMN is bound by residues 128 to 130 (RSS), 248 to 249 (QA), Gly300, 315 to 319 (KPIPT), and Arg341.

It belongs to the chorismate synthase family. In terms of assembly, homotetramer. FMNH2 serves as cofactor.

The catalysed reaction is 5-O-(1-carboxyvinyl)-3-phosphoshikimate = chorismate + phosphate. Its pathway is metabolic intermediate biosynthesis; chorismate biosynthesis; chorismate from D-erythrose 4-phosphate and phosphoenolpyruvate: step 7/7. Its function is as follows. Catalyzes the anti-1,4-elimination of the C-3 phosphate and the C-6 proR hydrogen from 5-enolpyruvylshikimate-3-phosphate (EPSP) to yield chorismate, which is the branch point compound that serves as the starting substrate for the three terminal pathways of aromatic amino acid biosynthesis. This reaction introduces a second double bond into the aromatic ring system. The chain is Chorismate synthase from Trichlorobacter lovleyi (strain ATCC BAA-1151 / DSM 17278 / SZ) (Geobacter lovleyi).